The primary structure comprises 384 residues: Chaperone protein DnaJ (384 aa).

The 66-residue stretch at 5-70 folds into the J domain; that stretch reads DFYEVLGVSK…DKKAAYDRYG (66 aa). The CR-type zinc-finger motif lies at 143 to 221; the sequence is GAQKTITVPG…CHGSGRIEKE (79 aa). Residues Cys-156, Cys-159, Cys-173, Cys-176, Cys-195, Cys-198, Cys-209, and Cys-212 each coordinate Zn(2+). CXXCXGXG motif repeat units follow at residues 156–163, 173–180, 195–202, and 209–216; these read CGSCNGTG, CPTCSGLG, CPTCGGQG, and CRVCHGSG.

The protein belongs to the DnaJ family. Homodimer. Zn(2+) serves as cofactor.

It is found in the cytoplasm. Participates actively in the response to hyperosmotic and heat shock by preventing the aggregation of stress-denatured proteins and by disaggregating proteins, also in an autonomous, DnaK-independent fashion. Unfolded proteins bind initially to DnaJ; upon interaction with the DnaJ-bound protein, DnaK hydrolyzes its bound ATP, resulting in the formation of a stable complex. GrpE releases ADP from DnaK; ATP binding to DnaK triggers the release of the substrate protein, thus completing the reaction cycle. Several rounds of ATP-dependent interactions between DnaJ, DnaK and GrpE are required for fully efficient folding. Also involved, together with DnaK and GrpE, in the DNA replication of plasmids through activation of initiation proteins. The polypeptide is Chaperone protein DnaJ (Rhodobacter capsulatus (Rhodopseudomonas capsulata)).